The chain runs to 1053 residues: Serine/threonine-protein phosphatase 6 regulatory ankyrin repeat subunit A (1053 aa).

ANK repeat units follow at residues 40–69 (EKRTPLHAAAYLGDAEIIELLILSGARVNA), 73–102 (KWLTPLHRAVASCSEEAVQVLLKHSADVNA), 106–135 (NWQTPLHIAAANKAVKCAEALVPLLSNVNV), 139–168 (AGRTALHHAAFSGHGEMVKLLLSRGANINA), 172–201 (KDRRAIHWAAYMGHIEVVKLLVSHGAEVTC), 205–234 (KSYTPLHAAASSGMISVVKYLLDLGVDMNE), 238–267 (YGNTPLHVACYNGQDVVVNELIDCGAIVNQ), 271–301 (KGFTPLHFAAASTHGALCLELLVGNGADVNM), 305–334 (DGKTPLHMTALHGRFSRSQTIIQSGAVIDC), 338–367 (NGNTPLHIAARYGHELLINTLITSGADTAK), 371–400 (HGMFPLHLAALSGFSDCCRKLLSSGFDIDT), 404–433 (FGRTCLHAAAAGGNLECLNLLLNTGADFNK), 437–466 (FGRSPLHYAAANCNYQCLFALVGSGASVND), 470–500 (RGCTPLHYAATSDTDGKCLEYLLRNDANPGI), 504–534 (QGYNAVHYSAAYGHRLCLQLIASETPLDVLM), 549–578 (ATISPLHLAAYHGHHQALEVLVQSLLDLDV), 582–611 (SGRTPLDLAAFKGHVECVDVLINQGASILV), 616–645 (LKRTPIHAAATNGHSECLRLLIGNAEPQNA), 652–681 (NGQTPLMLSVLNGHTDCVYSLLNKGANVDA), 685–714 (WGRTALHRGAVTGHEECVDALLQHGAKCLL), 718–747 (RGRTPIHLSAACGHIGVLGALLQSAASMDA), 755–784 (HGYTALHWACYNGHETCVELLLEQEVFQKT), 787–817 (NAFSPLHCAVINDNEGAAEMLIDTLGASIVN), 822–851 (KGRTPLHAAAFTDHVECLQLLLSHNAQVNS), 855–885 (TGKTPLMMAAENGQTNTVEMLVSSASAELTL), 889–918 (SKNTALHLACSKGHETSALLILEKITDRNL), and 925–954 (ALQTPLHVAARNGLTMVVQELLGKGASVLA). 2 positions are modified to phosphoserine: Ser-1007 and Ser-1011.

Protein phosphatase 6 (PP6) holoenzyme is proposed to be a heterotrimeric complex formed by the catalytic subunit, a SAPS domain-containing subunit (PP6R) and an ankyrin repeat-domain containing regulatory subunit (ARS). Interacts with PPP6C, PPP6R1 and PPP6R3. Interacts with PPP1C and HNRPK. Ubiquitinated by the ECS(RAB40C) complex leading to its degradation and decreased PP6 activity.

It localises to the nucleus. The protein resides in the nucleoplasm. The protein localises to the cytoplasm. It is found in the cytosol. Its subcellular location is the cell projection. It localises to the lamellipodium. Functionally, regulatory subunit of protein phosphatase 6 (PP6) that may be involved in the recognition of phosphoprotein substrates. Involved in the PP6-mediated dephosphorylation of NFKBIE opposing its degradation in response to TNF-alpha. Selectively inhibits the phosphatase activity of PPP1C. Targets PPP1C to modulate HNRPK phosphorylation. Involved in the PP6-mediated dephosphorylation of MOB1 and induced focal adhesion assembly during cell migration. The polypeptide is Serine/threonine-protein phosphatase 6 regulatory ankyrin repeat subunit A (Homo sapiens (Human)).